Consider the following 112-residue polypeptide: MGDDELSEIRKRRMAQLQQQAGDQQAMQEEVERQQRLKSQIQMVLMQVLEPDARERLNTIRLTKPDFASAVEQQLVMLAQSGRLRQKITDAQLKDLLRQLAPAKRDYSITRK.

The protein belongs to the PDCD5 family.

This Methanoregula boonei (strain DSM 21154 / JCM 14090 / 6A8) protein is DNA-binding protein Mboo_1886.